Consider the following 601-residue polypeptide: Aspartate--tRNA ligase (601 aa).

E183 serves as a coordination point for L-aspartate. An aspartate region spans residues 207–210; it reads QIFK. R229 contributes to the L-aspartate binding site. Residues 229–231 and Q238 contribute to the ATP site; that span reads RDE. An L-aspartate-binding site is contributed by H457. E497 is an ATP binding site. Position 504 (R504) interacts with L-aspartate. 549-552 provides a ligand contact to ATP; it reads GIDR.

Belongs to the class-II aminoacyl-tRNA synthetase family. Type 1 subfamily. In terms of assembly, homodimer.

It is found in the cytoplasm. The catalysed reaction is tRNA(Asp) + L-aspartate + ATP = L-aspartyl-tRNA(Asp) + AMP + diphosphate. In terms of biological role, catalyzes the attachment of L-aspartate to tRNA(Asp) in a two-step reaction: L-aspartate is first activated by ATP to form Asp-AMP and then transferred to the acceptor end of tRNA(Asp). The protein is Aspartate--tRNA ligase of Leptospira interrogans serogroup Icterohaemorrhagiae serovar copenhageni (strain Fiocruz L1-130).